We begin with the raw amino-acid sequence, 162 residues long: Protein snakeskin (162 aa).

Topologically, residues 2 to 6 are cytoplasmic; that stretch reads VSVET. A helical transmembrane segment spans residues 7–27; the sequence is VGSIFIKALKLIINLVIIFLY. The Extracellular segment spans residues 28–53; that stretch reads RWGDGGEFLGIGGTWNLNEEKSADAE. Residues 54-74 form a helical membrane-spanning segment; the sequence is IVASGVMVGFLIYTGCHTIAF. Topologically, residues 75-88 are cytoplasmic; the sequence is AFGTTKHKGELCDT. A helical transmembrane segment spans residues 89 to 109; it reads IMNVVGCIMWIAVGGVALHYW. Over 110-128 the chain is Extracellular; sequence KGYMSDEGFLYVNSERQVG. The helical transmembrane segment at 129-149 threads the bilayer; that stretch reads IAMGSLCVIEGALYLLDTVLA. The Cytoplasmic portion of the chain corresponds to 150–162; that stretch reads CIHYSKGDTDYTQ.

In terms of assembly, forms a complex with Tsp2A and mesh. Interacts with mesh; the interaction may be necessary for the localization of both proteins to the cell apicolateral region.

The protein localises to the apicolateral cell membrane. It localises to the cell junction. It is found in the septate junction. Its function is as follows. Required for assembly of smooth septate junctions (sSJs), together with mesh and Tsp2A. May be important for barrier function of the midgut epithelium. The protein is Protein snakeskin of Drosophila melanogaster (Fruit fly).